A 71-amino-acid polypeptide reads, in one-letter code: uncharacterized protein (71 aa).

A signal peptide spans 1–26 (MIKFSVILGMIRCSLTHITTKNTVNA).

This is an uncharacterized protein from Bacillus subtilis (strain 168).